Reading from the N-terminus, the 779-residue chain is MNNKILEQLEFNKVKELLLPYLKTEQSQEELLELEPMTEAPKIEKSFNEISDMEQIFVEHHSFGIVSLSSISESLKRLELSTDLNIQELLAIKKVLQSSSDMIHFYSDLDNVSFQSLDRLFENLEQFPNLQGSFQAINDGGFLEHFASPELERIRRQLTNSERRVRQILQDMLKEKAELLSENLIASRSGRSVLPVKNTYRNRISGVVHDISSSGSTVYIEPRAVVTLNEEITQLRADERHEEGRILHAFSDLLRPHVATIRNNAWILGHLDFVRAKYLFMSDNKATIPKISNDSTLALINVRHPLLSNPVANDLHFDHDLTAIVITGPNTGGKTIMLKTLGLAQLMGQSGLPVLADKGSKIAVFNNIFADIGDEQSIEQSLSTFSSHMTHIVSILNEADHNSLVLFDELGAGTDPQEGASLAMAILEHLRLSHIKTMATTHYPELKAYGIETNFVENASMEFDAETLSPTYRFMQGVPGRSNAFEIASRLGLAPFIVKQAKQMTDSDSDVNRIIEQLEAQTLETRRRLDHIKEVEQENLKFNRAVKKLYNEFSHERDKELEKIYQEAQEIVDMALNESDTILKKLNDKSQLKPHEIIDAKAQIKKLAPQVDLSKNKVLNKAKKIKAARAPRIGDDIIVTSYGQRGTLTSQLKDGRWEAQVGIIKMTLTQDEFSLVRVQEEQKVKNKQINVVKKADGSGPRARLDLRGKRYEEAMQELDHFIDQALLNNMGQVDIIHGIGTGVIREGVTKYLRRNKHVKHFAYAPQNAGGSGATIVTLG.

328-335 (GPNTGGKT) contributes to the ATP binding site. The Smr domain maps to 704–779 (LDLRGKRYEE…GSGATIVTLG (76 aa)).

Belongs to the DNA mismatch repair MutS family. MutS2 subfamily. Homodimer. Binds to stalled ribosomes, contacting rRNA.

Its function is as follows. Endonuclease that is involved in the suppression of homologous recombination and thus may have a key role in the control of bacterial genetic diversity. In terms of biological role, acts as a ribosome collision sensor, splitting the ribosome into its 2 subunits. Detects stalled/collided 70S ribosomes which it binds and splits by an ATP-hydrolysis driven conformational change. Acts upstream of the ribosome quality control system (RQC), a ribosome-associated complex that mediates the extraction of incompletely synthesized nascent chains from stalled ribosomes and their subsequent degradation. Probably generates substrates for RQC. This is Endonuclease MutS2 from Streptococcus pyogenes serotype M1.